Reading from the N-terminus, the 596-residue chain is MADAEARAEFPEEARPDRGTLQVLQDMASRLRIHSIRATCSTSSGHPTSCSSSSEIMSVLFFYIMRYKQSDPENPDNDRFVLAKRLSFVDVATGWLGQGLGVACGMAYTGKYFDRASYRVFCLMSDGESSEGSVWEAMAFASYYSLDNLVAIFDVNRLGHSGALPAEHCINIYQRRCEAFGWNTYVVDGRDVEALCQVFWQASQVKHKPTAVVAKTFKGRGTPSIEDAESWHAKPMPRERADAIIKLIESQIQTSRNLDPQPPIEDSPEVNITDVRMTSPPDYRVGDKIATRKACGLALAKLGYANNRVVVLDGDTRYSTFSEIFNKEYPERFIECFMAEQNMVSVALGCASRGRTIAFASTFAAFLTRAFDHIRIGGLAESNINIIGSHCGVSVGDDGASQMALEDIAMFRTIPKCTIFYPTDAVSTEHAVALAANAKGMCFIRTTRPETMVIYTPQERFEIGQAKVLRHCVSDKVTVIGAGITVYEALAAADELSKQDIFIRVIDLFTIKPLDVATIVSSAKATEGRIITVEDHYPQGGIGEAVCAAVSMDPDIQVHSLAVSGVPQSGKSEELLDMYGISARHIIVAVKCMLLN.

Position 46 (His-46) interacts with substrate. Residues Ser-49 and Gly-94–Leu-96 contribute to the thiamine diphosphate site. Asp-126 is a Mg(2+) binding site. Residues Gly-127 and Asn-156 each coordinate thiamine diphosphate. Mg(2+) contacts are provided by Asn-156 and Leu-158. 2 residues coordinate thiamine diphosphate: Lys-218 and His-232. Residues His-232, Arg-292, and Ser-319 each contribute to the substrate site. Residues Glu-340 and Phe-366 each coordinate thiamine diphosphate. The active-site Proton donor is Glu-340. Residues His-390 and Asp-398 each coordinate substrate. A thiamine diphosphate-binding site is contributed by Gln-402. Arg-448 lines the substrate pocket.

Belongs to the transketolase family. Homodimer. It depends on Mg(2+) as a cofactor. Requires Ca(2+) as cofactor. Mn(2+) serves as cofactor. Co(2+) is required as a cofactor. The cofactor is thiamine diphosphate. In terms of tissue distribution, widely expressed. Expressed in endothelial cells and in peripheral neurons (at protein level). As to expression, not expressed in fetal neocortex. Expressed in fetal neocortex.

The protein resides in the cytoplasm. It carries out the reaction D-sedoheptulose 7-phosphate + D-glyceraldehyde 3-phosphate = aldehydo-D-ribose 5-phosphate + D-xylulose 5-phosphate. Functionally, catalyzes the transfer of a two-carbon ketol group from a ketose donor to an aldose acceptor, via a covalent intermediate with the cofactor thiamine pyrophosphate. Its function is as follows. During fetal neocortex development, may be essential to maintain the full number of basal radial glia (bRG). bRG are neural progenitor cells that undergo asymmetric divisions, generating a bRG (self-renewal) and a neuron, in contrast to basal intermediate progenitors (bIPs), which typically divide once to give rise to 2 neurons. bRG generate more cortical neurons over time than bIPs. This is Transketolase-like protein 1 (TKTL1) from Homo sapiens (Human).